Here is a 198-residue protein sequence, read N- to C-terminus: Endonuclease V (198 aa).

The Mg(2+) site is built by D38 and D101.

It belongs to the endonuclease V family. The cofactor is Mg(2+).

It localises to the cytoplasm. It carries out the reaction Endonucleolytic cleavage at apurinic or apyrimidinic sites to products with a 5'-phosphate.. In terms of biological role, DNA repair enzyme involved in the repair of deaminated bases. Selectively cleaves double-stranded DNA at the second phosphodiester bond 3' to a deoxyinosine leaving behind the intact lesion on the nicked DNA. The chain is Endonuclease V from Saccharolobus islandicus (strain M.14.25 / Kamchatka #1) (Sulfolobus islandicus).